Consider the following 171-residue polypeptide: Shikimate kinase (171 aa).

Residue 14–19 (GAGKST) participates in ATP binding. A Mg(2+)-binding site is contributed by S18. 3 residues coordinate substrate: D36, R60, and G82. R120 is an ATP binding site. R139 contacts substrate. Q156 is an ATP binding site.

It belongs to the shikimate kinase family. As to quaternary structure, monomer. It depends on Mg(2+) as a cofactor.

The protein resides in the cytoplasm. It catalyses the reaction shikimate + ATP = 3-phosphoshikimate + ADP + H(+). It participates in metabolic intermediate biosynthesis; chorismate biosynthesis; chorismate from D-erythrose 4-phosphate and phosphoenolpyruvate: step 5/7. Its function is as follows. Catalyzes the specific phosphorylation of the 3-hydroxyl group of shikimic acid using ATP as a cosubstrate. The sequence is that of Shikimate kinase from Shewanella loihica (strain ATCC BAA-1088 / PV-4).